The chain runs to 116 residues: Large ribosomal subunit protein uL22 (116 aa).

Belongs to the universal ribosomal protein uL22 family. In terms of assembly, part of the 50S ribosomal subunit.

This protein binds specifically to 23S rRNA; its binding is stimulated by other ribosomal proteins, e.g. L4, L17, and L20. It is important during the early stages of 50S assembly. It makes multiple contacts with different domains of the 23S rRNA in the assembled 50S subunit and ribosome. In terms of biological role, the globular domain of the protein is located near the polypeptide exit tunnel on the outside of the subunit, while an extended beta-hairpin is found that lines the wall of the exit tunnel in the center of the 70S ribosome. This chain is Large ribosomal subunit protein uL22, found in Sulfurihydrogenibium sp. (strain YO3AOP1).